The chain runs to 68 residues: Large ribosomal subunit protein uL29 (68 aa).

The protein belongs to the universal ribosomal protein uL29 family.

The protein is Large ribosomal subunit protein uL29 of Persephonella marina (strain DSM 14350 / EX-H1).